Here is a 306-residue protein sequence, read N- to C-terminus: Glutaminase (306 aa).

Residues Ser-64, Asn-115, Glu-159, Asn-166, Tyr-190, Tyr-242, and Val-260 each coordinate substrate.

It belongs to the glutaminase family. Homotetramer.

The catalysed reaction is L-glutamine + H2O = L-glutamate + NH4(+). The chain is Glutaminase from Vibrio atlanticus (strain LGP32) (Vibrio splendidus (strain Mel32)).